We begin with the raw amino-acid sequence, 770 residues long: ARF GTPase-activating protein GIT1 (770 aa).

Positions 1–124 (MSRKGPRAEV…AFVHKLPCRD (124 aa)) constitute an Arf-GAP domain. The segment at 1-124 (MSRKGPRAEV…AFVHKLPCRD (124 aa)) is interaction with gamma-tubulin and localization to the centrosome. The C4-type zinc finger occupies 11 to 34 (CADCSAPDPGWASISRGVLVCDEC). ANK repeat units follow at residues 132–161 (DLSK…QANF), 166–195 (KGTT…DPGS), and 199–228 (NGRT…ELTD). At Tyr-224 the chain carries Phosphotyrosine. The interaction with PCLO stretch occupies residues 245–374 (HYIIPQMADR…QGKSLSSPTD (130 aa)). Positions 253-424 (DRSRQKCMSQ…NRARSMDSSD (172 aa)) are interaction with PTK2/FAK1. Positions 254–376 (RSRQKCMSQS…KSLSSPTDNL (123 aa)) are interaction with ARHGEF7. The segment at 363–425 (RQQGKSLSSP…RARSMDSSDL (63 aa)) is disordered. A compositionally biased stretch (polar residues) spans 366-383 (GKSLSSPTDNLELSARNQ). Phosphoserine is present on residues Ser-368 and Ser-371. Thr-373 bears the Phosphothreonine mark. The tract at residues 375–596 (NLELSARNQS…QEGSRHASKL (222 aa)) is interaction with NCK2 and GRIN3A. Positions 375 to 596 (NLELSARNQS…QEGSRHASKL (222 aa)) are required for localization at synapses. Phosphoserine is present on residues Ser-379 and Ser-384. Tyr-392 bears the Phosphotyrosine mark. Residues Ser-394 and Ser-397 each carry the phosphoserine modification. Residues 394–403 (SVASDEDTDQ) show a composition bias toward acidic residues. Position 401 is a phosphothreonine (Thr-401). A phosphoserine mark is found at Ser-419, Ser-422, and Ser-426. The segment at 420-475 (MDSSDLSDGAVTLQEYLELKKALATSEAKVQQLMKVNSSLSDELRKLQREIHKLQA) is interaction with MAPK1. The interval 429-629 (AVTLQEYLEL…EGKRFLELSK (201 aa)) is interaction with IKBKG. Residues 449–483 (VQQLMKVNSSLSDELRKLQREIHKLQAENLQLRQP) are a coiled coil. 2 positions are modified to phosphoserine: Ser-507 and Ser-545. At Thr-546 the chain carries Phosphothreonine. Tyr-554 and Tyr-563 each carry phosphotyrosine. Phosphoserine is present on residues Ser-570, Ser-580, Ser-601, and Ser-605. Over residues 574–586 (VTFTPSSPLLSSS) the composition is skewed to low complexity. Residues 574-615 (VTFTPSSPLLSSSQEGSRHASKLSRHGSGAESDYENTQSGEP) form a disordered region. Thr-610 is subject to Phosphothreonine. The residue at position 639 (Ser-639) is a Phosphoserine. The segment at 646 to 770 (PGLPSTEDVI…VTITTREKKQ (125 aa)) is interaction with PXN and TGFB1I1.

Forms homodimers and possibly oligomers. May form heterooligomers with GIT2. Interacts with G protein-coupled receptor kinases, including GRK2, GRK3, GRK5 and GRK6. Interacts with PPFIA1, PPFIA2 and PPFIA4. Interacts with GRIP1 and forms a ternary complex with PPFIA1 and GRIP1. Directly interacts with ARHGEF7/beta-PIX, forming in vitro a heptameric complex made of a GIT1 dimer and an ARHGEF7 trimer. Directly interacts with PXN/paxillin; this interaction is enhanced in the presence of ARHGEF7. Directly interacts (via C-terminus) with TGFB1I1/Hic-5 (via LD motif 3). Directly interacts with PTK2/FAK1. May interact with PTK2B/PYK2; this interaction may be indirect. Interacts with AMPA receptors GRIA2/3. Directly interacts with protein Piccolo/PCLO. Forms a complex with Ephrin-B1/EFNB1 and NCK2/GRB4 (via SH2); this interaction is important for spine morphogenesis and synapse formation. Interaction with NCK2 is transient and depends upon GIT1 phosphorylation at Tyr-392. Interacts with GRIN3A/GluN3A (via C-terminus); this interaction competes with GIT1 interaction with ARHGEF7 and limits synaptic localization of GIT1. Interacts with IKBKG/NEMO in resting bone mesenchymal stem cells, as well as in TNF-stimulated cells; this interaction may increase IKBKG affinity for 'Lys-63'-linked polyubiquitin chains. Interacts with GABA(A) receptors, including GABRB3 and GABRG2. Interacts with SCRIB. Interacts (via N- and C-terminus) with ENTR1/SDCCAG3 (via N-terminus); this interaction is direct. May form a tripartite complex with ENTR1 and PTPN13. Interacts with YWHAZ. Interacts with PAK1 and PAK3. Directly interacts (via N-terminus) with gamma-tubulin. Interacts with MAPK1 and MAPK3; this interaction is required for MAPK1/3 recruitment to focal adhesions. Phosphorylated on tyrosine residues by PTK2/FAK1 and SRC in growing fibroblasts. Phosphorylation at Tyr-392 is induced by activation of Ephrin-B1/EFNB1 and catalyzed by SRC family kinases. It is required for the interaction with NCK2 and for GIT1 recruitment to synapses in hippocampal neurons. As to expression, widely expressed. Expressed at high levels in testis (at protein level). Expressed in the brain, including in CA1 hippocampal neurons, in the amygdala, and thalamic nuclei (at protein level).

The protein localises to the cytoplasm. It localises to the synapse. The protein resides in the presynapse. Its subcellular location is the postsynapse. It is found in the postsynaptic density. The protein localises to the cell junction. It localises to the focal adhesion. The protein resides in the cell projection. Its subcellular location is the lamellipodium. It is found in the cytoskeleton. The protein localises to the microtubule organizing center. It localises to the centrosome. The protein resides in the spindle pole. In terms of biological role, GTPase-activating protein for ADP ribosylation factor family members, including ARF1. Multidomain scaffold protein that interacts with numerous proteins and therefore participates in many cellular functions, including receptor internalization, focal adhesion remodeling, and signaling by both G protein-coupled receptors and tyrosine kinase receptors. Through PAK1 activation, positively regulates microtubule nucleation during interphase. Plays a role in the regulation of cytokinesis; for this function, may act in a pathway also involving ENTR1 and PTPN13. May promote cell motility both by regulating focal complex dynamics and by the activation of RAC1. May act as scaffold for MAPK1/3 signal transduction, recruiting MAPK1/3 to focal adhesions after EGF stimulation via a Src-dependent pathway, hence stimulating cell migration. Plays a role in brain development and function. Involved in the regulation of spine density and synaptic plasticity that is required for processes involved in learning. Plays an important role in dendritic spine morphogenesis and synapse formation. In hippocampal neurons, recruits guanine nucleotide exchange factors (GEFs), such as ARHGEF7/beta-PIX, to the synaptic membrane. These in turn locally activate RAC1, which is an essential step for spine morphogenesis and synapse formation. May contribute to the organization of presynaptic active zones through oligomerization and formation of a Piccolo/PCLO-based protein network, which includes ARHGEF7/beta-PIX and FAK1. In neurons, through its interaction with liprin-alpha family members, may be required for AMPA receptor (GRIA2/3) proper targeting to the cell membrane. In complex with GABA(A) receptors and ARHGEF7, plays a crucial role in regulating GABA(A) receptor synaptic stability, maintaining GPHN/gephyrin scaffolds and hence GABAergic inhibitory synaptic transmission, by locally coordinating RAC1 and PAK1 downstream effector activity, leading to F-actin stabilization. May also be important for RAC1 downstream signaling pathway through PAK3 and regulation of neuronal inhibitory transmission at presynaptic input. Required for successful bone regeneration during fracture healing. The function in intramembranous ossification may, at least partly, exerted by macrophages in which GIT1 is a key negative regulator of redox homeostasis, IL1B production, and glycolysis, acting through the ERK1/2/NRF2/NFE2L2 axis. May also play a role in angiogenesis during fracture healing. In this process, may regulate activation of the canonical NF-kappa-B signal in bone mesenchymal stem cells by enhancing the interaction between NEMO and 'Lys-63'-ubiquitinated RIPK1/RIP1, eventually leading to enhanced production of VEGFA and others angiogenic factors. Essential for VEGF signaling through the activation of phospholipase C-gamma and ERK1/2, hence may control endothelial cell proliferation and angiogenesis. This Rattus norvegicus (Rat) protein is ARF GTPase-activating protein GIT1.